We begin with the raw amino-acid sequence, 365 residues long: UDP-N-acetylglucosamine--N-acetylmuramyl-(pentapeptide) pyrophosphoryl-undecaprenol N-acetylglucosamine transferase (365 aa).

UDP-N-acetyl-alpha-D-glucosamine-binding positions include 19-21, Asn-131, Arg-170, Ser-201, Ile-255, 274-279, and Gln-300; these read TGG and ALTVTE.

This sequence belongs to the glycosyltransferase 28 family. MurG subfamily.

Its subcellular location is the cell inner membrane. It catalyses the reaction di-trans,octa-cis-undecaprenyl diphospho-N-acetyl-alpha-D-muramoyl-L-alanyl-D-glutamyl-meso-2,6-diaminopimeloyl-D-alanyl-D-alanine + UDP-N-acetyl-alpha-D-glucosamine = di-trans,octa-cis-undecaprenyl diphospho-[N-acetyl-alpha-D-glucosaminyl-(1-&gt;4)]-N-acetyl-alpha-D-muramoyl-L-alanyl-D-glutamyl-meso-2,6-diaminopimeloyl-D-alanyl-D-alanine + UDP + H(+). The protein operates within cell wall biogenesis; peptidoglycan biosynthesis. Cell wall formation. Catalyzes the transfer of a GlcNAc subunit on undecaprenyl-pyrophosphoryl-MurNAc-pentapeptide (lipid intermediate I) to form undecaprenyl-pyrophosphoryl-MurNAc-(pentapeptide)GlcNAc (lipid intermediate II). The polypeptide is UDP-N-acetylglucosamine--N-acetylmuramyl-(pentapeptide) pyrophosphoryl-undecaprenol N-acetylglucosamine transferase (Acinetobacter baumannii (strain ACICU)).